A 456-amino-acid polypeptide reads, in one-letter code: MSSSQQIAKNARKAGNILKTISNEGRSDILYKIHDALKANAHAIEEANKIDLAVAKETGLADSLLKRLDLFKGDKFEVMLQGIKDVAELEDPVGKVKMARELDDGLTLYQVTAPVGVLLVIFESRPEVIANITALSIKSGNAAILKGGKESVNTFREMAKIVNDTIAQFQSETGVPVGSVQLIETRQDVSDLLDQDEYIDLVVPRGSNALVRKIKDTTKIPVLGHADGICSIYLDEDADLIKAKRISLDAKTNYPAGCNAMETLLINPKFSKWWEVLENLTLEGGVTIHATKDLKTAYFDKLNELGKLTEAIQCKTVDADEEQDFDKEFLSLDLAAKFVTSTESAIQHINTHSSRHTDAIVTENKANAEKFMKGVDSSGVYWNASTRFADGFRYGFGAEVGISTSKIHARGPVGLDGLVSYQYQIRGDGQVASDYLGAGGNKAFVHKDLDIKTVTL.

An N-acetylserine modification is found at S2.

The protein belongs to the gamma-glutamyl phosphate reductase family.

It carries out the reaction L-glutamate 5-semialdehyde + phosphate + NADP(+) = L-glutamyl 5-phosphate + NADPH + H(+). It participates in amino-acid biosynthesis; L-proline biosynthesis; L-glutamate 5-semialdehyde from L-glutamate: step 2/2. Its function is as follows. Catalyzes the NADPH dependent reduction of L-gamma-glutamyl 5-phosphate into L-glutamate 5-semialdehyde and phosphate. The product spontaneously undergoes cyclization to form 1-pyrroline-5-carboxylate. The protein is Gamma-glutamyl phosphate reductase (PRO2) of Saccharomyces cerevisiae (strain ATCC 204508 / S288c) (Baker's yeast).